Reading from the N-terminus, the 180-residue chain is MARLKEKIQTDVNAAMMQRFGYKNVMQIPRLEKVVVNMGLGEAIQNPKGLDAAVGDLTRITGQKPVITTAKKSIAGFKLREGMKIGCKVTLRGDKMYDFVDKLVNLSLPRVRDFRGVSPKSFDGRGNYTLGLKEQLIFPEIEYDKIDRLRGMDVTFVTTAKTDEEARELLRLIGMPFRAE.

Belongs to the universal ribosomal protein uL5 family. Part of the 50S ribosomal subunit; part of the 5S rRNA/L5/L18/L25 subcomplex. Contacts the 5S rRNA and the P site tRNA. Forms a bridge to the 30S subunit in the 70S ribosome.

This is one of the proteins that bind and probably mediate the attachment of the 5S RNA into the large ribosomal subunit, where it forms part of the central protuberance. In the 70S ribosome it contacts protein S13 of the 30S subunit (bridge B1b), connecting the 2 subunits; this bridge is implicated in subunit movement. Contacts the P site tRNA; the 5S rRNA and some of its associated proteins might help stabilize positioning of ribosome-bound tRNAs. The protein is Large ribosomal subunit protein uL5 of Heliobacterium modesticaldum (strain ATCC 51547 / Ice1).